We begin with the raw amino-acid sequence, 742 residues long: Synaptic vesicle glycoprotein 2A (742 aa).

Residues 1–57 (MEEGFRDRAAFIRGAKDIAKEVKKHAAKKVVKGLDRVQDEYSRRSYSRFEEEDDDDD) are interaction with SYT1. Residues 1–169 (MEEGFRDRAA…GHGRFQWTLY (169 aa)) lie on the Cytoplasmic side of the membrane. Positions 33 to 49 (GLDRVQDEYSRRSYSRF) are enriched in basic and acidic residues. The disordered stretch occupies residues 33-144 (GLDRVQDEYS…GRGEAQRRKE (112 aa)). Serine 80 and serine 81 each carry phosphoserine. Phosphothreonine is present on threonine 84. Residues 122–137 (VRGGLSDGEGPPGGRG) are compositionally biased toward gly residues. At serine 127 the chain carries Phosphoserine. Residues 170–190 (FVLGLALMADGVEVFVVGFVL) traverse the membrane as a helical segment. Residues 191–205 (PSAEKDMCLSDSNKG) lie on the Extracellular side of the membrane. A helical transmembrane segment spans residues 206–226 (MLGLIVYLGMMVGAFLWGGLA). Residues 227–233 (DRLGRRQ) lie on the Cytoplasmic side of the membrane. The helical transmembrane segment at 234-254 (CLLISLSVNSVFAFFSSFVQG) threads the bilayer. Residues 255–262 (YGTFLFCR) are Extracellular-facing. Residues 263-283 (LLSGVGIGGSIPIVFSYFSEF) traverse the membrane as a helical segment. At 284 to 294 (LAQEKRGEHLS) the chain is on the cytoplasmic side. A helical transmembrane segment spans residues 295-315 (WLCMFWMIGGVYAAAMAWAII). Residues 316 to 334 (PHYGWSFQMGSAYQFHSWR) lie on the Extracellular side of the membrane. Residues 335 to 355 (VFVLVCAFPSVFAIGALTTQP) traverse the membrane as a helical segment. The Cytoplasmic portion of the chain corresponds to 356–447 (ESPRFFLENG…CFGPEYRRIT (92 aa)). Serine 393 is subject to Phosphoserine. A helical transmembrane segment spans residues 448 to 468 (LMMMGVWFTMSFSYYGLTVWF). Residues 469–598 (PDMIRHLQAV…GTGEGAYMVY (130 aa)) lie on the Extracellular side of the membrane. At tyrosine 480 the chain carries Phosphotyrosine. 3 N-linked (GlcNAc...) asparagine glycosylation sites follow: asparagine 498, asparagine 548, and asparagine 573. A helical transmembrane segment spans residues 599-619 (FVSFLGTLAVLPGNIVSALLM). Topologically, residues 620-626 (DKIGRLR) are cytoplasmic. The chain crosses the membrane as a helical span at residues 627-647 (MLAGSSVMSCVSCFFLSFGNS). Residues 648–651 (ESAM) lie on the Extracellular side of the membrane. Residues 652 to 672 (IALLCLFGGVSIASWNALDVL) traverse the membrane as a helical segment. The Cytoplasmic segment spans residues 673 to 685 (TVELYPSDKRTTA). Residues 686 to 708 (FGFLNALCKLAAVLGISIFTSFV) form a helical membrane-spanning segment. The Extracellular segment spans residues 709 to 712 (GITK). A helical transmembrane segment spans residues 713–731 (AAPILFASAALALGSSLAL). At 732–742 (KLPETRGQVLQ) the chain is on the cytoplasmic side.

Belongs to the major facilitator superfamily. As to quaternary structure, interacts with SYT1/synaptotagmin-1 in a calcium-dependent manner. Binds the adapter protein complex AP-2. (Microbial infection) Interacts with C.botulinum neurotoxin type A2 (BoNT/A, botA). Interaction is improved by glycosylation of SV2. Post-translationally, phosphorylation by CK1 of the N-terminal cytoplasmic domain regulates interaction with SYT1. N-glycosylated.

The protein localises to the presynapse. Its subcellular location is the cytoplasmic vesicle. It is found in the secretory vesicle. It localises to the synaptic vesicle membrane. In terms of biological role, plays a role in the control of regulated secretion in neural and endocrine cells, enhancing selectively low-frequency neurotransmission. Positively regulates vesicle fusion by maintaining the readily releasable pool of secretory vesicles. (Microbial infection) Receptor for the C.botulinum neurotoxin type A2 (BoNT/A, botA); glycosylation is not essential but enhances the interaction. Probably also serves as a receptor for the closely related C.botulinum neurotoxin type A1. The sequence is that of Synaptic vesicle glycoprotein 2A (SV2A) from Homo sapiens (Human).